The sequence spans 330 residues: MANFAAITGWGMAVPERVLTNADLERMVETSDEWIQTRTGIRERRIAGPGEHTSALSIAAGRAALARAGLDAAQIDTVILATCTPDRPFPATACTVQAGVGARRAAAFDIVAACSGFVYGLQVATSMVRSGAARNVLFVACDIFTHFINWNDRNTCVLFGDGAGAVVLQPSDEPAGLLSCVLGADGEQEDLMAVDAGGTRLPATPELLEEGRQYVFMNGREIFKHAVREMAASSFDALQAAGLSTDDVALVIPHQANLRIIEATAKRLEVPLDRVFVNLDRYGNTSAASIPIALVEAVEQQRLRKGDYALLTSFGGGLTWASAVIRWSAG.

Catalysis depends on residues Cys-114 and His-254. Residues 255–259 form an ACP-binding region; it reads QANLR. The active site involves Asn-284.

The protein belongs to the thiolase-like superfamily. FabH family. In terms of assembly, homodimer.

The protein resides in the cytoplasm. It carries out the reaction malonyl-[ACP] + acetyl-CoA + H(+) = 3-oxobutanoyl-[ACP] + CO2 + CoA. Its pathway is lipid metabolism; fatty acid biosynthesis. In terms of biological role, catalyzes the condensation reaction of fatty acid synthesis by the addition to an acyl acceptor of two carbons from malonyl-ACP. Catalyzes the first condensation reaction which initiates fatty acid synthesis and may therefore play a role in governing the total rate of fatty acid production. Possesses both acetoacetyl-ACP synthase and acetyl transacylase activities. Its substrate specificity determines the biosynthesis of branched-chain and/or straight-chain of fatty acids. This Roseiflexus castenholzii (strain DSM 13941 / HLO8) protein is Beta-ketoacyl-[acyl-carrier-protein] synthase III.